A 209-amino-acid chain; its full sequence is UPF0174 protein HP_1587 (209 aa).

The protein belongs to the UPF0174 family.

The chain is UPF0174 protein HP_1587 from Helicobacter pylori (strain ATCC 700392 / 26695) (Campylobacter pylori).